We begin with the raw amino-acid sequence, 38 residues long: Large ribosomal subunit protein bL36 (38 aa).

The protein belongs to the bacterial ribosomal protein bL36 family.

The chain is Large ribosomal subunit protein bL36 from Phytoplasma mali (strain AT).